Consider the following 237-residue polypeptide: Phosphoribosylaminoimidazole-succinocarboxamide synthase (237 aa).

This sequence belongs to the SAICAR synthetase family.

The catalysed reaction is 5-amino-1-(5-phospho-D-ribosyl)imidazole-4-carboxylate + L-aspartate + ATP = (2S)-2-[5-amino-1-(5-phospho-beta-D-ribosyl)imidazole-4-carboxamido]succinate + ADP + phosphate + 2 H(+). It participates in purine metabolism; IMP biosynthesis via de novo pathway; 5-amino-1-(5-phospho-D-ribosyl)imidazole-4-carboxamide from 5-amino-1-(5-phospho-D-ribosyl)imidazole-4-carboxylate: step 1/2. The protein is Phosphoribosylaminoimidazole-succinocarboxamide synthase of Shigella dysenteriae serotype 1 (strain Sd197).